A 149-amino-acid polypeptide reads, in one-letter code: MSATRANKDIFTLFDKKGQGAIAKDSLGDYLRAIGYNPTNQLVQDIINADSSLRDASSLTLDQITGLIEVNEKELDATTKAKTEDFVKAFQVFDKESTGKVSVGDLRYMLTGLGEKLTDAEVDELLKGVEVDSNGEIDYKKFIEDVLRQ.

EF-hand domains are found at residues S2 to N37, A81 to K116, and L117 to Q149. Positions 15, 94, 98, 100, and 105 each coordinate Ca(2+). K116 participates in a covalent cross-link: Glycyl lysine isopeptide (Lys-Gly) (interchain with G-Cter in ubiquitin). Ca(2+) contacts are provided by D123, K127, and D132.

In terms of assembly, interacts with MYO1, MYO2 and IQG1 by binding to their IQ domains. Interacts with SEC4.

It is found in the bud neck. The protein localises to the bud tip. Functionally, essential light chain for the class II conventional myosin MYO1. Also acts as light chain for the class V unconventional myosin MYO2 and for IQG1. Involved in the assembly of the contractile actomyosin ring at the bud neck during cytokinesis by recruiting IQG1 to the bud neck. Also required for chitin and MYO2-dependent secretory vesicle deposition to the center of the bud neck for septum formation. May stabilize MYO2 by binding to its IQ domains. Its major function is probably not to regulate MYO1 activity, but rather to coordinate actin ring formation and targeted membrane deposition during cytokinesis via its interactions with MYO1, IQG1 and MYO2. This chain is Myosin light chain 1 (MLC1), found in Saccharomyces cerevisiae (strain ATCC 204508 / S288c) (Baker's yeast).